Reading from the N-terminus, the 549-residue chain is Glucose-6-phosphate isomerase (549 aa).

Residues K80, K228, and K234 each carry the N6-acetyllysine modification. E355 (proton donor) is an active-site residue. Active-site residues include H386 and K514.

This sequence belongs to the GPI family.

The protein localises to the cytoplasm. It catalyses the reaction alpha-D-glucose 6-phosphate = beta-D-fructose 6-phosphate. It functions in the pathway carbohydrate biosynthesis; gluconeogenesis. Its pathway is carbohydrate degradation; glycolysis; D-glyceraldehyde 3-phosphate and glycerone phosphate from D-glucose: step 2/4. Catalyzes the reversible isomerization of glucose-6-phosphate to fructose-6-phosphate. The chain is Glucose-6-phosphate isomerase from Escherichia fergusonii (strain ATCC 35469 / DSM 13698 / CCUG 18766 / IAM 14443 / JCM 21226 / LMG 7866 / NBRC 102419 / NCTC 12128 / CDC 0568-73).